A 417-amino-acid polypeptide reads, in one-letter code: Exodeoxyribonuclease 7 large subunit (417 aa).

This sequence belongs to the XseA family. Heterooligomer composed of large and small subunits.

Its subcellular location is the cytoplasm. The catalysed reaction is Exonucleolytic cleavage in either 5'- to 3'- or 3'- to 5'-direction to yield nucleoside 5'-phosphates.. Functionally, bidirectionally degrades single-stranded DNA into large acid-insoluble oligonucleotides, which are then degraded further into small acid-soluble oligonucleotides. This is Exodeoxyribonuclease 7 large subunit from Helicobacter hepaticus (strain ATCC 51449 / 3B1).